Here is a 399-residue protein sequence, read N- to C-terminus: uncharacterized protein (399 aa).

Positions 375-399 are disordered; the sequence is AAGGHRGSHGKSEQAATVRVVDDRR.

It belongs to the mycobacterial PPE family.

This is an uncharacterized protein from Mycobacterium tuberculosis (strain CDC 1551 / Oshkosh).